Reading from the N-terminus, the 1096-residue chain is Mediator of replication checkpoint protein 1 (1096 aa).

Basic and acidic residues predominate over residues 68 to 85 (EGKKAPEQNHNNGKDRSE). Residues 68–90 (EGKKAPEQNHNNGKDRSENSLPT) are disordered. Position 144 is a phosphoserine (S144). Disordered stretches follow at residues 166 to 200 (ALKTPLTTGRPGATQRIDSSGATSQTQPIKSIEPQ), 294 to 316 (IQSELASEDSKREKARNVEYKKP), and 336 to 365 (DDSSSNEDDDIKLENAHPKPVQNDDELHEN). Residues 181–200 (RIDSSGATSQTQPIKSIEPQ) show a composition bias toward polar residues. Over residues 294–315 (IQSELASEDSKREKARNVEYKK) the composition is skewed to basic and acidic residues. Positions 336 to 346 (DDSSSNEDDDI) are enriched in acidic residues. A phosphoserine mark is found at S409, S411, and S434. Residues 488–542 (QKEVIETKGLKLEDMAKEKEIVENLLEQEILRNKRIRQKEKRREKLEENDFQLNA) are a coiled coil. The disordered stretch occupies residues 527 to 620 (EKRREKLEEN…VEAKPKEKAD (94 aa)). The span at 547-560 (SDSGSESSGFALSG) shows a compositional bias: low complexity. Basic residues predominate over residues 591–600 (KQKKSHHVKH). Residues S605 and S607 each carry the phosphoserine modification. A Phosphothreonine modification is found at T609. A compositionally biased stretch (basic and acidic residues) spans 611–620 (VEAKPKEKAD). Positions 652–716 (DTQNIEEVMA…IKELKKRGVT (65 aa)) form a coiled coil. The disordered stretch occupies residues 724–743 (EESEDEWHGIGGADGEGSDD). Phosphoserine is present on residues S801 and S807. The segment covering 881-898 (DTQDNSINVGDNTGNNEQ) has biased composition (polar residues). The disordered stretch occupies residues 881-903 (DTQDNSINVGDNTGNNEQKPVDQ). The residue at position 911 (S911) is a Phosphoserine. The interval 1058-1096 (RKTEGSHRYHHDHHNKKMKMKTKTKSNKLFESGQDSFDN) is disordered. Residues 1065 to 1083 (RYHHDHHNKKMKMKTKTKS) show a composition bias toward basic residues.

As to quaternary structure, interacts with CDC45 in S phase. Post-translationally, phosphorylated by MEC1 and RAD53.

It localises to the nucleus. In terms of biological role, required for normal DNA replication. Phosphorylated in response to DNA replication stress. Phosphorylation allows it to mediate the activation of RAD53. The protein is Mediator of replication checkpoint protein 1 (MRC1) of Saccharomyces cerevisiae (strain ATCC 204508 / S288c) (Baker's yeast).